Consider the following 591-residue polypeptide: Aspartate--tRNA ligase (591 aa).

Residue E173 participates in L-aspartate binding. The aspartate stretch occupies residues 197-200; the sequence is QLFK. Position 219 (R219) interacts with L-aspartate. ATP-binding positions include 219 to 221 and Q228; that span reads RDE. An L-aspartate-binding site is contributed by H446. E482 contributes to the ATP binding site. Residue R489 coordinates L-aspartate. An ATP-binding site is contributed by 534–537; it reads GLDR.

Belongs to the class-II aminoacyl-tRNA synthetase family. Type 1 subfamily. Homodimer.

It is found in the cytoplasm. It catalyses the reaction tRNA(Asp) + L-aspartate + ATP = L-aspartyl-tRNA(Asp) + AMP + diphosphate. Its function is as follows. Catalyzes the attachment of L-aspartate to tRNA(Asp) in a two-step reaction: L-aspartate is first activated by ATP to form Asp-AMP and then transferred to the acceptor end of tRNA(Asp). The polypeptide is Aspartate--tRNA ligase (Limosilactobacillus fermentum (strain NBRC 3956 / LMG 18251) (Lactobacillus fermentum)).